Reading from the N-terminus, the 109-residue chain is Nucleoid-associated protein Swoo_1794 (109 aa).

The tract at residues glutamine 88–phenylalanine 109 is disordered.

It belongs to the YbaB/EbfC family. Homodimer.

The protein localises to the cytoplasm. Its subcellular location is the nucleoid. Functionally, binds to DNA and alters its conformation. May be involved in regulation of gene expression, nucleoid organization and DNA protection. This is Nucleoid-associated protein Swoo_1794 from Shewanella woodyi (strain ATCC 51908 / MS32).